The primary structure comprises 160 residues: Putative oxygenase ATEG_00330 (160 aa).

Residues 24-100 (HYFGTALHAK…RNIAADPEFA (77 aa)) form the EthD domain.

The protein belongs to the tpcK family.

In terms of biological role, putative oxygenase; part of the gene cluster that mediates the biosynthesis of isoflavipucine. The PKS part of the PKS-NRPS ATEG_00325 probably assembles a triketide from an acetyl starter and two malonyl-CoA extender units. The poly-beta-keto intermediate would then be fused to the leucine unit by the NRPS part. The resulting amide would be liberated from the PKS-NRPS through reductive release of the linear PKS-NRPS product from the enzyme complex. Further steps in isoflapucine synthesis include a cyclization step, an oxidation step, a hydrolysis step involving a trans-amidation, and an additional oxidation step, leading to flavipucine. Formation of isoflavipucine from flavipucine requires an unusual rearrangement. Alternative rearrangement reactions could build up rubrobramide, representing a branching of flavipucine biosynthesis. The enzymes involved in the post-PKS-NRPS steps have not been identified yet, but the putative oxygenases ATEG_003329 and ATEG_00330 encoded by the cluster could play a role. The sequence is that of Putative oxygenase ATEG_00330 from Aspergillus terreus (strain NIH 2624 / FGSC A1156).